Consider the following 591-residue polypeptide: Probable translation initiation factor IF-2 (591 aa).

Residues 7–223 enclose the tr-type G domain; the sequence is LRTPIVCVMG…LLGLAQKFLE (217 aa). The tract at residues 16–23 is G1; the sequence is GHVDHGKT. Residue 16–23 coordinates GTP; that stretch reads GHVDHGKT. Positions 41–45 are G2; the sequence is AITQH. Residues 78–81 are G3; the sequence is DTPG. Residues 78-82 and 132-135 each bind GTP; these read DTPGH and NKID. Residues 132-135 form a G4 region; sequence NKID. The interval 200-202 is G5; it reads SAM.

The protein belongs to the TRAFAC class translation factor GTPase superfamily. Classic translation factor GTPase family. IF-2 subfamily.

Its function is as follows. Function in general translation initiation by promoting the binding of the formylmethionine-tRNA to ribosomes. Seems to function along with eIF-2. The sequence is that of Probable translation initiation factor IF-2 from Methanosarcina barkeri (strain Fusaro / DSM 804).